We begin with the raw amino-acid sequence, 137 residues long: Small ribosomal subunit protein bS6 (137 aa).

The segment at 96–137 is disordered; the sequence is ITEASPMAKAKDERDTRRSSEERAPRAEATEEAEESAENTAE. The span at 104 to 124 shows a compositional bias: basic and acidic residues; the sequence is KAKDERDTRRSSEERAPRAEA. Residues 125–137 show a composition bias toward acidic residues; the sequence is TEEAEESAENTAE.

It belongs to the bacterial ribosomal protein bS6 family.

Functionally, binds together with bS18 to 16S ribosomal RNA. This Shewanella pealeana (strain ATCC 700345 / ANG-SQ1) protein is Small ribosomal subunit protein bS6.